The primary structure comprises 326 residues: Light-induced protein, chloroplastic (326 aa).

The transit peptide at Met1–Gln63 directs the protein to the chloroplast.

The protein belongs to the LIPC family. As to quaternary structure, associates with the major light-harvesting antenna complex polypeptides of the PSII oxygen-evolving complex. As to expression, expressed at high levels in leaves and in the petals and anthers of flowers.

Its subcellular location is the plastid. The protein resides in the chloroplast thylakoid membrane. Required for normal plant growth. May be both photoprotective and play an ancillary role in photosynthesis. May structurally stabilize thylakoids during osmotic and oxidative stress. In Solanum demissum (Wild potato), this protein is Light-induced protein, chloroplastic.